The primary structure comprises 161 residues: Regulator of ribonuclease activity A (161 aa).

It belongs to the RraA family. Homotrimer. Binds to both RNA-binding sites in the C-terminal region of Rne and to RhlB.

It is found in the cytoplasm. Globally modulates RNA abundance by binding to RNase E (Rne) and regulating its endonucleolytic activity. Can modulate Rne action in a substrate-dependent manner by altering the composition of the degradosome. Modulates RNA-binding and helicase activities of the degradosome. This Alteromonas mediterranea (strain DSM 17117 / CIP 110805 / LMG 28347 / Deep ecotype) protein is Regulator of ribonuclease activity A.